A 61-amino-acid chain; its full sequence is Large ribosomal subunit protein bL32 (61 aa).

It belongs to the bacterial ribosomal protein bL32 family.

This Syntrophus aciditrophicus (strain SB) protein is Large ribosomal subunit protein bL32.